A 441-amino-acid polypeptide reads, in one-letter code: Cysteine--tRNA ligase (441 aa).

C24 lines the Zn(2+) pocket. Residues 26-36 (PTVYNYIHIGN) carry the 'HIGH' region motif. Positions 204, 230, and 234 each coordinate Zn(2+). The 'KMSKS' region signature appears at 262 to 266 (KMSKS). Position 265 (K265) interacts with ATP.

This sequence belongs to the class-I aminoacyl-tRNA synthetase family. As to quaternary structure, monomer. The cofactor is Zn(2+).

It localises to the cytoplasm. It carries out the reaction tRNA(Cys) + L-cysteine + ATP = L-cysteinyl-tRNA(Cys) + AMP + diphosphate. The chain is Cysteine--tRNA ligase from Mycoplasma mycoides subsp. mycoides SC (strain CCUG 32753 / NCTC 10114 / PG1).